A 606-amino-acid polypeptide reads, in one-letter code: Protein couch potato (606 aa).

The Nuclear localization signal signature appears at 81–105; it reads IKRRPTLPQTPASAPQVLSPSPKRQ. 7 consecutive repeat copies span residues 91–95, 109–113, 114–118, 122–126, 128–132, 134–138, and 159–163. The segment at 91–164 is 7 X 5 AA approximate repeats of P-V-S-V-P; sequence PASAPQVLSP…SHSHPISHPH (74 aa). 4 disordered regions span residues 147-166, 282-311, 324-365, and 388-410; these read QIAH…PHHH, QQQQ…AGAA, VPTT…TSAA, and PATS…NSNS. A compositionally biased stretch (low complexity) spans 344 to 365; that stretch reads SNSATASAPTTPSPAGSVTSAA. An RRM domain is found at 442–524; that stretch reads RTLFVSGLPM…QTIRLEFAKS (83 aa).

Expressed in neural precursors and their daughter cells in the embryonic peripheral nervous system. Less abundant in a number of glial cells in the peripheral and central nervous systems and also present at low levels in the developing gut.

The protein localises to the nucleus. May play a role in the development or function of the peripheral nervous system by regulating the processing of nervous system-specific transcripts. The chain is Protein couch potato (cpo) from Drosophila melanogaster (Fruit fly).